Here is a 309-residue protein sequence, read N- to C-terminus: Probable manganese-dependent inorganic pyrophosphatase (309 aa).

Positions 9, 13, 15, 75, 97, and 149 each coordinate Mn(2+).

It belongs to the PPase class C family. Mn(2+) serves as cofactor.

It localises to the cytoplasm. The enzyme catalyses diphosphate + H2O = 2 phosphate + H(+). This chain is Probable manganese-dependent inorganic pyrophosphatase, found in Exiguobacterium sp. (strain ATCC BAA-1283 / AT1b).